We begin with the raw amino-acid sequence, 547 residues long: Chaperonin GroEL (547 aa).

ATP is bound by residues 30 to 33, Lys-51, 87 to 91, Gly-415, 479 to 481, and Asp-495; these read TLGP, DGTTT, and NAA. Residues 524 to 547 are disordered; the sequence is APKKDEPTPPAAGGGMGGMGGMDF. Residues 535 to 547 show a composition bias toward gly residues; sequence AGGGMGGMGGMDF.

Belongs to the chaperonin (HSP60) family. In terms of assembly, forms a cylinder of 14 subunits composed of two heptameric rings stacked back-to-back. Interacts with the co-chaperonin GroES.

It localises to the cytoplasm. It carries out the reaction ATP + H2O + a folded polypeptide = ADP + phosphate + an unfolded polypeptide.. Its function is as follows. Together with its co-chaperonin GroES, plays an essential role in assisting protein folding. The GroEL-GroES system forms a nano-cage that allows encapsulation of the non-native substrate proteins and provides a physical environment optimized to promote and accelerate protein folding. The polypeptide is Chaperonin GroEL (Xylella fastidiosa (strain M23)).